A 350-amino-acid polypeptide reads, in one-letter code: Very-long-chain 3-oxoacyl-CoA reductase (350 aa).

Residues 20 to 40 form a helical membrane-spanning segment; the sequence is ALLFSLLFGVFKLTTFTLRFA. 7 residues coordinate NADP(+): Val66, Asp120, Asn147, Tyr221, Lys225, Val254, and Ser256. Tyr221 acts as the Proton donor in catalysis. The active-site Lowers pKa of active site Tyr is the Lys225.

Belongs to the short-chain dehydrogenases/reductases (SDR) family.

Its subcellular location is the endoplasmic reticulum membrane. The enzyme catalyses a very-long-chain (3R)-3-hydroxyacyl-CoA + NADP(+) = a very-long-chain 3-oxoacyl-CoA + NADPH + H(+). Its pathway is lipid metabolism; fatty acid biosynthesis. Functionally, component of the microsomal membrane bound fatty acid elongation system, which produces the 26-carbon very long-chain fatty acids (VLCFA) from palmitate. Catalyzes the reduction of the 3-ketoacyl-CoA intermediate that is formed in each cycle of fatty acid elongation. VLCFAs serve as precursors for ceramide and sphingolipids. In Lodderomyces elongisporus (strain ATCC 11503 / CBS 2605 / JCM 1781 / NBRC 1676 / NRRL YB-4239) (Yeast), this protein is Very-long-chain 3-oxoacyl-CoA reductase.